A 221-amino-acid polypeptide reads, in one-letter code: Thiamine-phosphate synthase (221 aa).

Residues 39-43 (QLRCK) and asparagine 76 contribute to the 4-amino-2-methyl-5-(diphosphooxymethyl)pyrimidine site. Aspartate 77 and aspartate 96 together coordinate Mg(2+). Serine 114 is a 4-amino-2-methyl-5-(diphosphooxymethyl)pyrimidine binding site. 140-142 (TPT) serves as a coordination point for 2-[(2R,5Z)-2-carboxy-4-methylthiazol-5(2H)-ylidene]ethyl phosphate. A 4-amino-2-methyl-5-(diphosphooxymethyl)pyrimidine-binding site is contributed by lysine 143. Glycine 171 lines the 2-[(2R,5Z)-2-carboxy-4-methylthiazol-5(2H)-ylidene]ethyl phosphate pocket.

Belongs to the thiamine-phosphate synthase family. Requires Mg(2+) as cofactor.

The enzyme catalyses 2-[(2R,5Z)-2-carboxy-4-methylthiazol-5(2H)-ylidene]ethyl phosphate + 4-amino-2-methyl-5-(diphosphooxymethyl)pyrimidine + 2 H(+) = thiamine phosphate + CO2 + diphosphate. It carries out the reaction 2-(2-carboxy-4-methylthiazol-5-yl)ethyl phosphate + 4-amino-2-methyl-5-(diphosphooxymethyl)pyrimidine + 2 H(+) = thiamine phosphate + CO2 + diphosphate. It catalyses the reaction 4-methyl-5-(2-phosphooxyethyl)-thiazole + 4-amino-2-methyl-5-(diphosphooxymethyl)pyrimidine + H(+) = thiamine phosphate + diphosphate. The protein operates within cofactor biosynthesis; thiamine diphosphate biosynthesis; thiamine phosphate from 4-amino-2-methyl-5-diphosphomethylpyrimidine and 4-methyl-5-(2-phosphoethyl)-thiazole: step 1/1. In terms of biological role, condenses 4-methyl-5-(beta-hydroxyethyl)thiazole monophosphate (THZ-P) and 2-methyl-4-amino-5-hydroxymethyl pyrimidine pyrophosphate (HMP-PP) to form thiamine monophosphate (TMP). This is Thiamine-phosphate synthase from Deinococcus geothermalis (strain DSM 11300 / CIP 105573 / AG-3a).